A 155-amino-acid polypeptide reads, in one-letter code: 3-hydroxyacyl-[acyl-carrier-protein] dehydratase FabZ (155 aa).

Histidine 57 is a catalytic residue.

The protein belongs to the thioester dehydratase family. FabZ subfamily.

It localises to the cytoplasm. It carries out the reaction a (3R)-hydroxyacyl-[ACP] = a (2E)-enoyl-[ACP] + H2O. Functionally, involved in unsaturated fatty acids biosynthesis. Catalyzes the dehydration of short chain beta-hydroxyacyl-ACPs and long chain saturated and unsaturated beta-hydroxyacyl-ACPs. The protein is 3-hydroxyacyl-[acyl-carrier-protein] dehydratase FabZ of Cereibacter sphaeroides (strain ATCC 17025 / ATH 2.4.3) (Rhodobacter sphaeroides).